Reading from the N-terminus, the 431-residue chain is Adenylosuccinate synthetase (431 aa).

GTP contacts are provided by residues 13 to 19 (GDEGKGK) and 41 to 43 (GHT). The Proton acceptor role is filled by aspartate 14. Positions 14 and 41 each coordinate Mg(2+). IMP is bound by residues 14 to 17 (DEGK), 39 to 42 (NAGH), threonine 130, arginine 144, glutamine 225, threonine 240, and arginine 304. The active-site Proton donor is histidine 42. 300–306 (ATTGRKR) is a substrate binding site. Residues arginine 306, 332–334 (KLD), and 415–417 (STG) each bind GTP.

Belongs to the adenylosuccinate synthetase family. Homodimer. The cofactor is Mg(2+).

Its subcellular location is the cytoplasm. The enzyme catalyses IMP + L-aspartate + GTP = N(6)-(1,2-dicarboxyethyl)-AMP + GDP + phosphate + 2 H(+). Its pathway is purine metabolism; AMP biosynthesis via de novo pathway; AMP from IMP: step 1/2. In terms of biological role, plays an important role in the de novo pathway of purine nucleotide biosynthesis. Catalyzes the first committed step in the biosynthesis of AMP from IMP. This chain is Adenylosuccinate synthetase, found in Shewanella denitrificans (strain OS217 / ATCC BAA-1090 / DSM 15013).